We begin with the raw amino-acid sequence, 373 residues long: MSEVKSRKKPGPKVAAPEPEKRSDGRKNPEARGDAGWADPRTGLSLLSLAMTLGLAWLVFQQSEKFAKVEKQYRLLQTESSEFQGLQSKISLISSKLESTENTLQEATSSISLMTQFEQEVSGLQRSIRDIETSEEMLTQKMQNLNEKFQNITDFWKRTLAEMIDDTAVFKSEVKDTHSEVTLKINSADQEIKSLTERLKDLEDSTLRNIRTVSRQEEEDLLRVEAQLSSDTKAVKKLEEEQHTLLARDEDLTNKLSSYEPKVEECKAHFPTIENAVHSVLRVSQDLIGTERKMEELTMQMFNMEDDMLRAVSEIMEMQKTLEGIQYDNSLLKMQNELVVLKGKVHDFIAYSSAREKGTLGEYSLGNKGTDEY.

The segment covering 1 to 11 has biased composition (basic residues); that stretch reads MSEVKSRKKPG. Positions 1–38 are disordered; the sequence is MSEVKSRKKPGPKVAAPEPEKRSDGRKNPEARGDAGWA. Residues 18 to 33 show a composition bias toward basic and acidic residues; sequence EPEKRSDGRKNPEARG. The helical transmembrane segment at 43 to 59 threads the bilayer; that stretch reads GLSLLSLAMTLGLAWLV. 2 coiled-coil regions span residues 86 to 257 and 285 to 324; these read LQSK…NKLS and QDLI…TLEG. N-linked (GlcNAc...) asparagine glycosylation occurs at asparagine 151.

In terms of processing, N-glycosylated at Asn-151.

It is found in the endoplasmic reticulum membrane. In terms of biological role, target of p53/TP53 with pro-apoptotic function. This chain is Inhibitor of nuclear factor kappa-B kinase-interacting protein (Ikbip), found in Mus musculus (Mouse).